A 427-amino-acid chain; its full sequence is Enolase (427 aa).

Gln162 serves as a coordination point for (2R)-2-phosphoglycerate. Glu204 (proton donor) is an active-site residue. Residues Asp241, Glu284, and Asp311 each coordinate Mg(2+). Residues Lys336, Arg365, Ser366, and Lys387 each contribute to the (2R)-2-phosphoglycerate site. The Proton acceptor role is filled by Lys336.

Belongs to the enolase family. Mg(2+) is required as a cofactor.

The protein localises to the cytoplasm. The protein resides in the secreted. Its subcellular location is the cell surface. It catalyses the reaction (2R)-2-phosphoglycerate = phosphoenolpyruvate + H2O. Its pathway is carbohydrate degradation; glycolysis; pyruvate from D-glyceraldehyde 3-phosphate: step 4/5. Catalyzes the reversible conversion of 2-phosphoglycerate (2-PG) into phosphoenolpyruvate (PEP). It is essential for the degradation of carbohydrates via glycolysis. In Natranaerobius thermophilus (strain ATCC BAA-1301 / DSM 18059 / JW/NM-WN-LF), this protein is Enolase.